A 583-amino-acid chain; its full sequence is Proteasome-associated ATPase (583 aa).

Residues 2–90 adopt a coiled-coil conformation; sequence ASREDRDAAN…REEVDRLAQP (89 aa). 271–276 is an ATP binding site; the sequence is GCGKTL. Positions 582–583 are docks into pockets in the proteasome alpha-ring; the sequence is YL.

This sequence belongs to the AAA ATPase family. As to quaternary structure, homohexamer. Assembles into a hexameric ring structure that caps the 20S proteasome core. Strongly interacts with the prokaryotic ubiquitin-like protein Pup through a hydrophobic interface; the interacting region of ARC lies in its N-terminal coiled-coil domain. There is one Pup binding site per ARC hexamer ring. Upon ATP-binding, the C-terminus of ARC interacts with the alpha-rings of the proteasome core, possibly by binding to the intersubunit pockets.

It participates in protein degradation; proteasomal Pup-dependent pathway. Functionally, ATPase which is responsible for recognizing, binding, unfolding and translocation of pupylated proteins into the bacterial 20S proteasome core particle. May be essential for opening the gate of the 20S proteasome via an interaction with its C-terminus, thereby allowing substrate entry and access to the site of proteolysis. Thus, the C-termini of the proteasomal ATPase may function like a 'key in a lock' to induce gate opening and therefore regulate proteolysis. The polypeptide is Proteasome-associated ATPase (Acidothermus cellulolyticus (strain ATCC 43068 / DSM 8971 / 11B)).